An 860-amino-acid chain; its full sequence is Leucine--tRNA ligase (860 aa).

Positions 42–52 (PYPSGRLHMGH) match the 'HIGH' region motif. Positions 619–623 (KMSKS) match the 'KMSKS' region motif. K622 provides a ligand contact to ATP.

It belongs to the class-I aminoacyl-tRNA synthetase family.

The protein localises to the cytoplasm. The catalysed reaction is tRNA(Leu) + L-leucine + ATP = L-leucyl-tRNA(Leu) + AMP + diphosphate. The polypeptide is Leucine--tRNA ligase (Citrobacter koseri (strain ATCC BAA-895 / CDC 4225-83 / SGSC4696)).